Reading from the N-terminus, the 885-residue chain is Translation initiation factor IF-2 (885 aa).

2 disordered regions span residues Lys135–Glu159 and Gln184–Met289. Positions Gln184–Ile232 are enriched in basic and acidic residues. Residues Gly253–Arg266 show a composition bias toward basic residues. Residues Gly267 to Glu276 show a composition bias toward basic and acidic residues. The tr-type G domain occupies Pro385–Lys554. Positions Gly394 to Thr401 are G1. Gly394–Thr401 is a binding site for GTP. The segment at Gly419–His423 is G2. The interval Asp440–Gly443 is G3. GTP is bound by residues Asp440 to His444 and Asn494 to Asp497. A G4 region spans residues Asn494–Asp497. The G5 stretch occupies residues Ser530–Lys532.

Belongs to the TRAFAC class translation factor GTPase superfamily. Classic translation factor GTPase family. IF-2 subfamily.

It is found in the cytoplasm. Functionally, one of the essential components for the initiation of protein synthesis. Protects formylmethionyl-tRNA from spontaneous hydrolysis and promotes its binding to the 30S ribosomal subunits. Also involved in the hydrolysis of GTP during the formation of the 70S ribosomal complex. This Shewanella sp. (strain MR-7) protein is Translation initiation factor IF-2.